Consider the following 218-residue polypeptide: Peroxiredoxin-like 2A (218 aa).

Residues 3–101 (MWSIGVGAVG…DELGVPLYAV (99 aa)) are thioredoxin-like fold. Active-site redox-active residues include Cys-74 and Cys-77.

Belongs to the peroxiredoxin-like PRXL2 family. PRXL2A subfamily. As to expression, expressed in kidney, liver, skin, and brain. Widely expressed with highest levels detected in adipose tissue.

The protein localises to the cytoplasm. It is found in the secreted. In terms of biological role, involved in redox regulation of the cell. Acts as an antioxidant. Inhibits TNFSF11-induced NFKB1 and JUN activation and osteoclast differentiation. May affect bone resorption and help to maintain bone mass. Acts as a negative regulator of macrophage-mediated inflammation by inhibiting macrophage production of inflammatory cytokines, probably through suppression of the MAPK signaling pathway. The protein is Peroxiredoxin-like 2A (Prxl2a) of Mus musculus (Mouse).